A 69-amino-acid chain; its full sequence is uncharacterized protein (69 aa).

Residues Met1 to Ala16 form the signal peptide. Cys17 carries N-palmitoyl cysteine lipidation. A lipid anchor (S-diacylglycerol cysteine) is attached at Cys17.

It localises to the cell membrane. This is an uncharacterized protein from Bacillus subtilis (strain 168).